A 254-amino-acid polypeptide reads, in one-letter code: Large ribosomal subunit protein uL2 (254 aa).

This sequence belongs to the universal ribosomal protein uL2 family.

The chain is Large ribosomal subunit protein uL2 (RPL2) from Candida glabrata (strain ATCC 2001 / BCRC 20586 / JCM 3761 / NBRC 0622 / NRRL Y-65 / CBS 138) (Yeast).